Here is an 83-residue protein sequence, read N- to C-terminus: RNA-binding protein Hfq (83 aa).

In terms of domain architecture, Sm spans 10-69 (DPFLNALRREHVPVSIYLVNGIKLQGQIESFDQYVVLLRNTVTQMVYKHAISTIVPGRAV).

Belongs to the Hfq family. In terms of assembly, homohexamer.

Functionally, RNA chaperone that binds small regulatory RNA (sRNAs) and mRNAs to facilitate mRNA translational regulation in response to envelope stress, environmental stress and changes in metabolite concentrations. Also binds with high specificity to tRNAs. The chain is RNA-binding protein Hfq from Acidovorax ebreus (strain TPSY) (Diaphorobacter sp. (strain TPSY)).